Consider the following 257-residue polypeptide: Glucose-1-phosphate cytidylyltransferase (257 aa).

Residues leucine 6–leucine 10, glycine 11–arginine 13, lysine 23, serine 104, arginine 109, and glycine 128 contribute to the substrate site. Positions 129 and 234 each coordinate Mg(2+).

Belongs to the glucose-1-phosphate cytidylyltransferase family. In terms of assembly, homohexamer. Requires Mg(2+) as cofactor.

It carries out the reaction alpha-D-glucose 1-phosphate + CTP + H(+) = CDP-D-glucose + diphosphate. The protein operates within nucleotide-sugar biosynthesis; CDP-3,6-dideoxy-D-mannose biosynthesis; CDP-3,6-dideoxy-D-mannose from CTP and alpha-D-glucose 1-phosphate: step 1/5. It functions in the pathway bacterial outer membrane biogenesis; LPS O-antigen biosynthesis. In terms of biological role, involved in the biosynthesis of the tyvelose, a 3,6-dideoxyhexose found in the O-antigen of the surface lipopolysaccharides. It catalyzes the transfer of a CMP moiety from CTP to glucose 1-phosphate. The sequence is that of Glucose-1-phosphate cytidylyltransferase (rfbF) from Salmonella typhimurium (strain LT2 / SGSC1412 / ATCC 700720).